Consider the following 296-residue polypeptide: Probable porphobilinogen deaminase (296 aa).

Cys-241 bears the S-(dipyrrolylmethanemethyl)cysteine mark.

The protein belongs to the HMBS family. It depends on dipyrromethane as a cofactor.

The catalysed reaction is 4 porphobilinogen + H2O = hydroxymethylbilane + 4 NH4(+). Its pathway is porphyrin-containing compound metabolism; protoporphyrin-IX biosynthesis; coproporphyrinogen-III from 5-aminolevulinate: step 2/4. Tetrapolymerization of the monopyrrole PBG into the hydroxymethylbilane pre-uroporphyrinogen in several discrete steps. This Pyrobaculum neutrophilum (strain DSM 2338 / JCM 9278 / NBRC 100436 / V24Sta) (Thermoproteus neutrophilus) protein is Probable porphobilinogen deaminase.